The primary structure comprises 136 residues: Small ribosomal subunit protein bS6 (136 aa).

The tract at residues 96–136 (VTEPSALARSGSDAEADRAPADEGSVEAAGAEPGSEAEAEA) is disordered.

Belongs to the bacterial ribosomal protein bS6 family.

Functionally, binds together with bS18 to 16S ribosomal RNA. The sequence is that of Small ribosomal subunit protein bS6 from Methylococcus capsulatus (strain ATCC 33009 / NCIMB 11132 / Bath).